The chain runs to 390 residues: Magnesium-protoporphyrin IX monomethyl ester [oxidative] cyclase (390 aa).

Belongs to the AcsF family. Requires Fe cation as cofactor.

It carries out the reaction Mg-protoporphyrin IX 13-monomethyl ester + 3 NADPH + 3 O2 + 2 H(+) = 3,8-divinyl protochlorophyllide a + 3 NADP(+) + 5 H2O. It participates in porphyrin-containing compound metabolism; chlorophyll biosynthesis (light-independent). Its function is as follows. Catalyzes the formation of the isocyclic ring in chlorophyll biosynthesis. Mediates the cyclase reaction, which results in the formation of divinylprotochlorophyllide (Pchlide) characteristic of all chlorophylls from magnesium-protoporphyrin IX 13-monomethyl ester (MgPMME). This chain is Magnesium-protoporphyrin IX monomethyl ester [oxidative] cyclase, found in Prochlorococcus marinus (strain MIT 9215).